Here is a 185-residue protein sequence, read N- to C-terminus: MKLFSRTSLVALGTAAAITLSGVTAPAFADEDSNAAVSALKTAEDNTPEAPGASTPLKLEQPGTITGVPGKAITPVTVKVVAGEAESFTSDNLPSGLLIDNTGKITGTPKKEFTGSAKIIAKNEAGVEAEVYVNFDFNEEPSSEEPSSGSSDTDNIENWIKIITAVIGALTTILTFSTKLDSFLK.

The N-terminal stretch at 1 to 29 (MKLFSRTSLVALGTAAAITLSGVTAPAFA) is a signal peptide. Positions 41 to 66 (KTAEDNTPEAPGASTPLKLEQPGTIT) are disordered.

Post-translationally, glycosylated; by Pmt.

The protein localises to the secreted. This is an uncharacterized protein from Corynebacterium glutamicum (strain ATCC 13032 / DSM 20300 / JCM 1318 / BCRC 11384 / CCUG 27702 / LMG 3730 / NBRC 12168 / NCIMB 10025 / NRRL B-2784 / 534).